Reading from the N-terminus, the 398-residue chain is Lipase member K (398 aa).

The signal sequence occupies residues 1–19 (MWWLLATTCCVLLSGPIDG). Residues 78–377 (VVYLQHGLIA…HYNHMDFYLG (300 aa)) form the AB hydrolase-1 domain. Ser-171 serves as the catalytic Nucleophile. A disulfide bridge links Cys-245 with Cys-254. Asn-270 and Asn-326 each carry an N-linked (GlcNAc...) asparagine glycan. Residues Asp-342 and His-371 each act as charge relay system in the active site.

The protein belongs to the AB hydrolase superfamily. Lipase family.

The protein localises to the secreted. Functionally, plays a highly specific role in the last step of keratinocyte differentiation. May have an essential function in lipid metabolism of the most differentiated epidermal layers. The protein is Lipase member K (Lipk) of Mus musculus (Mouse).